The primary structure comprises 118 residues: Large ribosomal subunit protein bL20 (118 aa).

This sequence belongs to the bacterial ribosomal protein bL20 family.

Functionally, binds directly to 23S ribosomal RNA and is necessary for the in vitro assembly process of the 50S ribosomal subunit. It is not involved in the protein synthesizing functions of that subunit. In Fervidobacterium nodosum (strain ATCC 35602 / DSM 5306 / Rt17-B1), this protein is Large ribosomal subunit protein bL20.